Here is a 95-residue protein sequence, read N- to C-terminus: MEGFGSDFSSGSSSGKMDTGTIMEQVKVQIAVANAQELLQRMTDKCFKKCIGKPGSTLDNSEQKCIAMCMDRYMDAWNTVSRAYNSRLQRERAHI.

The Twin CX3C motif motif lies at 46-69 (CFKKCIGKPGSTLDNSEQKCIAMC). Cystine bridges form between C46–C69 and C50–C65.

Belongs to the small Tim family. In terms of assembly, heterohexamer; composed of 3 copies of TIMM8 (TIMM8A or TIMM8B) and 3 copies of TIMM13, named soluble 70 kDa complex. Associates with the TIM22 complex, whose core is composed of TIMM22.

The protein localises to the mitochondrion inner membrane. In terms of biological role, mitochondrial intermembrane chaperone that participates in the import and insertion of some multi-pass transmembrane proteins into the mitochondrial inner membrane. Also required for the transfer of beta-barrel precursors from the TOM complex to the sorting and assembly machinery (SAM complex) of the outer membrane. Acts as a chaperone-like protein that protects the hydrophobic precursors from aggregation and guide them through the mitochondrial intermembrane space. The TIMM8-TIMM13 complex mediates the import of some proteins while the predominant TIMM9-TIMM10 70 kDa complex mediates the import of much more proteins. This chain is Mitochondrial import inner membrane translocase subunit Tim13 (timm13), found in Danio rerio (Zebrafish).